The sequence spans 390 residues: GTPase Obg (390 aa).

An Obg domain is found at 1–159; that stretch reads MKFVDEATIK…RELRLELLLL (159 aa). The 174-residue stretch at 160–333 folds into the OBG-type G domain; sequence ADVGMLGLPN…LCDELADFMD (174 aa). GTP is bound by residues 166–173, 191–195, 213–216, 283–286, and 314–316; these read GLPNAGKS, FTTLI, DIPG, NKTD, and AAV. Serine 173 and threonine 193 together coordinate Mg(2+).

The protein belongs to the TRAFAC class OBG-HflX-like GTPase superfamily. OBG GTPase family. In terms of assembly, monomer. Mg(2+) serves as cofactor.

Its subcellular location is the cytoplasm. An essential GTPase which binds GTP, GDP and possibly (p)ppGpp with moderate affinity, with high nucleotide exchange rates and a fairly low GTP hydrolysis rate. Plays a role in control of the cell cycle, stress response, ribosome biogenesis and in those bacteria that undergo differentiation, in morphogenesis control. The protein is GTPase Obg of Aliivibrio fischeri (strain MJ11) (Vibrio fischeri).